Reading from the N-terminus, the 146-residue chain is Large ribosomal subunit protein uL15 (146 aa).

A compositionally biased stretch (basic and acidic residues) spans 1–13 (MKLHELKPSEGSR). The interval 1-54 (MKLHELKPSEGSRKVRNRVGRGIGSGNGKTAGKGHKGQNARSGGGVRPGFEGGQ) is disordered. 2 stretches are compositionally biased toward gly residues: residues 21–31 (RGIGSGNGKTA) and 42–52 (SGGGVRPGFEG).

Belongs to the universal ribosomal protein uL15 family. Part of the 50S ribosomal subunit.

Binds to the 23S rRNA. The chain is Large ribosomal subunit protein uL15 from Bacillus velezensis (strain DSM 23117 / BGSC 10A6 / LMG 26770 / FZB42) (Bacillus amyloliquefaciens subsp. plantarum).